Reading from the N-terminus, the 107-residue chain is Acidic phospholipase A2 2 (107 aa).

6 disulfide bridges follow: Cys26-Cys100, Cys28-Cys38, Cys37-Cys82, Cys43-Cys107, Cys44-Cys75, and Cys62-Cys73. Tyr27, Gly29, and Gly31 together coordinate Ca(2+). The active site involves His41. Asp42 serves as a coordination point for Ca(2+). Residue Asp76 is part of the active site.

It depends on Ca(2+) as a cofactor. In terms of tissue distribution, expressed by the venom gland.

Its subcellular location is the secreted. It carries out the reaction a 1,2-diacyl-sn-glycero-3-phosphocholine + H2O = a 1-acyl-sn-glycero-3-phosphocholine + a fatty acid + H(+). Its function is as follows. PLA2 catalyzes the calcium-dependent hydrolysis of the 2-acyl groups in 3-sn-phosphoglycerides. This Bothrops insularis (Golden lancehead) protein is Acidic phospholipase A2 2.